The primary structure comprises 275 residues: 1-deoxy-11-beta-hydroxypentalenate dehydrogenase (275 aa).

12–36 contributes to the NAD(+) binding site; that stretch reads GAASGIGLALSARFARAGAGVVMAD. A substrate-binding site is contributed by S144. Y157 serves as the catalytic Proton acceptor. Residue K161 coordinates NAD(+).

Belongs to the short-chain dehydrogenases/reductases (SDR) family.

The enzyme catalyses 1-deoxy-11beta-hydroxypentalenate + NAD(+) = 1-deoxy-11-oxopentalenate + NADH + H(+). The protein operates within antibiotic biosynthesis; pentalenolactone biosynthesis. Its function is as follows. Catalyzes the oxidation of 1-deoxy-11-beta-hydroxypentalenic acid to 1-deoxy-11-oxopentalenic acid in the biosynthesis of pentalenolactone antibiotic. In Streptomyces exfoliatus (Streptomyces hydrogenans), this protein is 1-deoxy-11-beta-hydroxypentalenate dehydrogenase (penF).